Consider the following 150-residue polypeptide: Deoxyuridine 5'-triphosphate nucleotidohydrolase (150 aa).

Residues 69–71 (RSG), N82, 86–88 (LID), and M96 each bind substrate.

This sequence belongs to the dUTPase family. Mg(2+) serves as cofactor.

The enzyme catalyses dUTP + H2O = dUMP + diphosphate + H(+). The protein operates within pyrimidine metabolism; dUMP biosynthesis; dUMP from dCTP (dUTP route): step 2/2. Its function is as follows. This enzyme is involved in nucleotide metabolism: it produces dUMP, the immediate precursor of thymidine nucleotides and it decreases the intracellular concentration of dUTP so that uracil cannot be incorporated into DNA. This is Deoxyuridine 5'-triphosphate nucleotidohydrolase from Acinetobacter baylyi (strain ATCC 33305 / BD413 / ADP1).